The following is a 524-amino-acid chain: Maturase K (524 aa).

Belongs to the intron maturase 2 family. MatK subfamily.

It localises to the plastid. The protein resides in the chloroplast. Its function is as follows. Usually encoded in the trnK tRNA gene intron. Probably assists in splicing its own and other chloroplast group II introns. This is Maturase K from Welwitschia mirabilis (Tree tumbo).